Here is a 383-residue protein sequence, read N- to C-terminus: uncharacterized protein (383 aa).

The signal sequence occupies residues 1–23; it reads MKLTSIPIASTLLSLLAASGTLA.

It belongs to the but2 family.

It localises to the cytoplasm. The protein resides in the nucleus. This is an uncharacterized protein from Schizosaccharomyces pombe (strain 972 / ATCC 24843) (Fission yeast).